Here is a 963-residue protein sequence, read N- to C-terminus: Thrombospondin-4 (963 aa).

The signal sequence occupies residues 1-26 (MPAPRAAAAAFLLLHLVLQPWQRTSA). The Laminin G-like domain maps to 29 to 194 (TPQVFDLLPS…LEELKLVVRG (166 aa)). The short motif at 138-140 (RGD) is the Cell attachment site element. One can recognise an EGF-like 1 domain in the interval 288-327 (PTRHCDSSPCFRGVRCTDTRDGFQCGPCPDGYTGNGITCS). 21 cysteine pairs are disulfide-bonded: C292–C303, C297–C312, C315–C326, C332–C343, C337–C352, C355–C379, C385–C396, C390–C405, C408–C420, C426–C440, C434–C450, C452–C463, C479–C484, C489–C509, C525–C545, C548–C568, C584–C604, C607–C627, C645–C665, C685–C705, and C721–C942. In terms of domain architecture, EGF-like 2; calcium-binding spans 328–365 (DVDECKYHPCYPGVRCVNLAPGFRCDACPVGFTGPMVQ). Positions 381-418 (DVDECQNGACVLNSICINTLGSYRCGPCKPGYTGDQTR) constitute an EGF-like 3; calcium-binding domain. Positions 422–464 (TERSCRNPEQNPCSVHAQCIEERQGDVTCVCGVGWAGDGYVCG) constitute an EGF-like 4 domain. TSP type-3 repeat units lie at residues 465 to 497 (KDVD…NSGQ), 498 to 533 (EDAD…NIDQ), 534 to 556 (RNSD…NNDQ), 557 to 592 (KDTD…NRDQ), 593 to 615 (QDRD…NPNQ), 616 to 653 (SDVD…NSSQ), 654 to 693 (LDTD…NPAQ), and 694 to 729 (EDSN…EITL). The Cell attachment site signature appears at 564-566 (RGD). The interval 579 to 676 (NILDNCPRVP…DDDDNDGIPD (98 aa)) is disordered. Residues N614 and N650 are each glycosylated (N-linked (GlcNAc...) asparagine). The segment covering 642-654 (TDNCPTVINSSQL) has biased composition (polar residues). A compositionally biased stretch (acidic residues) spans 662 to 673 (GDECDDDDDNDG). The TSP C-terminal domain occupies 733–947 (RAYQTVVLDP…LKYRCNDTIP (215 aa)). N943 carries N-linked (GlcNAc...) asparagine glycosylation.

The protein belongs to the thrombospondin family. As to quaternary structure, homopentamer; disulfide-linked. Interacts with PTBP3. Interacts (via EGF-like 3; calcium-binding domain) with ATF6 and facilitates its processing, activation and nuclear translocation. Interacts with NOTCH1. Heart. Up-regulated in the heart in response to ischemic injury and pathology (at protein level). Astrocytes; expressed at high levels in subventricular zone (SVZ)-derived astrocytes and at low levels in cortical astrocytes. In response to peripheral nerve injury, significantly up-regulated in the dorsal spinal cord (at protein level).

The protein localises to the endoplasmic reticulum. Its subcellular location is the sarcoplasmic reticulum. The protein resides in the secreted. It localises to the extracellular space. It is found in the extracellular matrix. Adhesive glycoprotein that mediates cell-to-cell and cell-to-matrix interactions and is involved in various processes including cellular proliferation, migration, adhesion and attachment, inflammatory response to CNS injury, regulation of vascular inflammation and adaptive responses of the heart to pressure overload and in myocardial function and remodeling. Binds to structural extracellular matrix (ECM) proteins and modulates the ECM in response to tissue damage, contributing to cardioprotective and adaptive ECM remodeling. Plays a role in ER stress response, via its interaction with the activating transcription factor 6 alpha (ATF6) which produces adaptive ER stress response factors and protects myocardium from pressure overload. May contribute to spinal presynaptic hypersensitivity and neuropathic pain states after peripheral nerve injury. May play a role in regulating protective astrogenesis from the subventricular zone (SVZ) niche after injury in a NOTCH1-dependent manner. The protein is Thrombospondin-4 (Thbs4) of Mus musculus (Mouse).